A 118-amino-acid polypeptide reads, in one-letter code: Large ribosomal subunit protein bL19 (118 aa).

Belongs to the bacterial ribosomal protein bL19 family.

Its function is as follows. This protein is located at the 30S-50S ribosomal subunit interface and may play a role in the structure and function of the aminoacyl-tRNA binding site. The sequence is that of Large ribosomal subunit protein bL19 from Campylobacter fetus subsp. fetus (strain 82-40).